A 232-amino-acid chain; its full sequence is Probable transcriptional regulatory protein Bd1964 (232 aa).

This sequence belongs to the TACO1 family.

The protein resides in the cytoplasm. This is Probable transcriptional regulatory protein Bd1964 from Bdellovibrio bacteriovorus (strain ATCC 15356 / DSM 50701 / NCIMB 9529 / HD100).